We begin with the raw amino-acid sequence, 497 residues long: Argininosuccinate lyase (497 aa).

This sequence belongs to the lyase 1 family. Argininosuccinate lyase subfamily.

Its subcellular location is the cytoplasm. The enzyme catalyses 2-(N(omega)-L-arginino)succinate = fumarate + L-arginine. Its pathway is amino-acid biosynthesis; L-arginine biosynthesis; L-arginine from L-ornithine and carbamoyl phosphate: step 3/3. The protein is Argininosuccinate lyase of Clavibacter michiganensis subsp. michiganensis (strain NCPPB 382).